The following is a 317-amino-acid chain: Transaldolase (317 aa).

The active-site Schiff-base intermediate with substrate is Lys126.

Belongs to the transaldolase family. Type 1 subfamily. Homodimer.

It is found in the cytoplasm. It catalyses the reaction D-sedoheptulose 7-phosphate + D-glyceraldehyde 3-phosphate = D-erythrose 4-phosphate + beta-D-fructose 6-phosphate. Its pathway is carbohydrate degradation; pentose phosphate pathway; D-glyceraldehyde 3-phosphate and beta-D-fructose 6-phosphate from D-ribose 5-phosphate and D-xylulose 5-phosphate (non-oxidative stage): step 2/3. In terms of biological role, transaldolase is important for the balance of metabolites in the pentose-phosphate pathway. This chain is Transaldolase, found in Paraburkholderia phytofirmans (strain DSM 17436 / LMG 22146 / PsJN) (Burkholderia phytofirmans).